Reading from the N-terminus, the 135-residue chain is ATP synthase epsilon chain (135 aa).

The tract at residues 84–107 is disordered; sequence SLSEEKQSEEQKQRLERAKKALSS. The segment covering 86 to 102 has biased composition (basic and acidic residues); the sequence is SEEKQSEEQKQRLERAK.

It belongs to the ATPase epsilon chain family. In terms of assembly, F-type ATPases have 2 components, CF(1) - the catalytic core - and CF(0) - the membrane proton channel. CF(1) has five subunits: alpha(3), beta(3), gamma(1), delta(1), epsilon(1). CF(0) has three main subunits: a, b and c.

It is found in the cell membrane. Produces ATP from ADP in the presence of a proton gradient across the membrane. The protein is ATP synthase epsilon chain of Elusimicrobium minutum (strain Pei191).